The chain runs to 313 residues: Fe-S cluster assembly protein dre2 (313 aa).

Disordered stretches follow at residues 1–25 (MSIT…SQKR) and 151–187 (GRKK…AQNN). The N-terminal SAM-like domain stretch occupies residues 20 to 145 (NGSQKRNLLL…FEKPVQEAAV (126 aa)). Residues 146 to 203 (PLKLGGRKKKDKTNGVNGVQNGVATNGASTNGVGMFDPAQNNDDELIDEDALLSDDDL) form a linker region. The segment covering 159 to 177 (NGVNGVQNGVATNGASTNG) has biased composition (polar residues). Positions 213, 225, 228, and 230 each coordinate [2Fe-2S] cluster. Residues 213 to 230 (CVPETAKKRRRPCKDCTC) are fe-S binding site A. 4 residues coordinate [4Fe-4S] cluster: C276, C279, C287, and C290. Short sequence motifs (cx2C motif) lie at residues 276–279 (CNSC) and 287–290 (CSSC). The tract at residues 276–290 (CNSCSLGDAFRCSSC) is fe-S binding site B.

The protein belongs to the anamorsin family. As to quaternary structure, monomer. Interacts with tah18. Interacts with mia40. Requires [2Fe-2S] cluster as cofactor. [4Fe-4S] cluster is required as a cofactor.

Its subcellular location is the cytoplasm. The protein localises to the mitochondrion intermembrane space. In terms of biological role, component of the cytosolic iron-sulfur (Fe-S) protein assembly (CIA) machinery required for the maturation of extramitochondrial Fe-S proteins. Part of an electron transfer chain functioning in an early step of cytosolic Fe-S biogenesis, facilitating the de novo assembly of a [4Fe-4S] cluster on the scaffold complex cfd1-nbp35. Electrons are transferred to dre2 from NADPH via the FAD- and FMN-containing protein tah18. Tah18-dre2 are also required for the assembly of the diferric tyrosyl radical cofactor of ribonucleotide reductase (RNR), probably by providing electrons for reduction during radical cofactor maturation in the catalytic small subunit rnr2. This Aspergillus oryzae (strain ATCC 42149 / RIB 40) (Yellow koji mold) protein is Fe-S cluster assembly protein dre2.